The following is a 253-amino-acid chain: Imidazole glycerol phosphate synthase subunit HisF (253 aa).

Catalysis depends on residues aspartate 12 and aspartate 131.

Belongs to the HisA/HisF family. In terms of assembly, heterodimer of HisH and HisF.

The protein localises to the cytoplasm. The enzyme catalyses 5-[(5-phospho-1-deoxy-D-ribulos-1-ylimino)methylamino]-1-(5-phospho-beta-D-ribosyl)imidazole-4-carboxamide + L-glutamine = D-erythro-1-(imidazol-4-yl)glycerol 3-phosphate + 5-amino-1-(5-phospho-beta-D-ribosyl)imidazole-4-carboxamide + L-glutamate + H(+). The protein operates within amino-acid biosynthesis; L-histidine biosynthesis; L-histidine from 5-phospho-alpha-D-ribose 1-diphosphate: step 5/9. In terms of biological role, IGPS catalyzes the conversion of PRFAR and glutamine to IGP, AICAR and glutamate. The HisF subunit catalyzes the cyclization activity that produces IGP and AICAR from PRFAR using the ammonia provided by the HisH subunit. The protein is Imidazole glycerol phosphate synthase subunit HisF of Corynebacterium urealyticum (strain ATCC 43042 / DSM 7109).